The sequence spans 276 residues: Anamorsin homolog (276 aa).

The segment at 1–152 (MEPYVVDNLN…TRGSSIKLPW (152 aa)) is N-terminal SAM-like domain. Residues 152–189 (WAHSDIEAAWENVDNETSYDVDKNLINTNSLLQKSDYV) form a linker region. Cysteine 195, cysteine 211, cysteine 214, and cysteine 216 together coordinate [2Fe-2S] cluster. The tract at residues 195-216 (CGQEFAKNSIGKRKRACKNCTC) is fe-S binding site A. 4 residues coordinate [4Fe-4S] cluster: cysteine 237, cysteine 240, cysteine 248, and cysteine 251. 2 short sequence motifs (cx2C motif) span residues 237–240 (CGNC) and 248–251 (CSTC). A fe-S binding site B region spans residues 237 to 251 (CGNCYLGDAFRCSTC).

Belongs to the anamorsin family. In terms of assembly, monomer. The cofactor is [2Fe-2S] cluster. Requires [4Fe-4S] cluster as cofactor.

The protein localises to the cytoplasm. It localises to the mitochondrion intermembrane space. Component of the cytosolic iron-sulfur (Fe-S) protein assembly (CIA) machinery. Required for the maturation of extramitochondrial Fe-S proteins. Part of an electron transfer chain functioning in an early step of cytosolic Fe-S biogenesis, facilitating the de novo assembly of a [4Fe-4S] cluster on the cytosolic Fe-S scaffold complex. Electrons are transferred from NADPH via a FAD- and FMN-containing diflavin oxidoreductase. Together with the diflavin oxidoreductase, also required for the assembly of the diferric tyrosyl radical cofactor of ribonucleotide reductase (RNR), probably by providing electrons for reduction during radical cofactor maturation in the catalytic small subunit. This is Anamorsin homolog from Schistosoma japonicum (Blood fluke).